The chain runs to 536 residues: Phosphoenolpyruvate carboxykinase (ATP) (536 aa).

3 residues coordinate substrate: Arg61, Tyr195, and Lys201. ATP contacts are provided by residues Lys201, His220, and 236-244; that span reads GLSGTGKTT. 2 residues coordinate Mn(2+): Lys201 and His220. Asp257 is a Mn(2+) binding site. 3 residues coordinate ATP: Glu285, Arg323, and Thr448. Residue Arg323 participates in substrate binding.

This sequence belongs to the phosphoenolpyruvate carboxykinase (ATP) family. Requires Mn(2+) as cofactor.

It localises to the cytoplasm. It carries out the reaction oxaloacetate + ATP = phosphoenolpyruvate + ADP + CO2. It participates in carbohydrate biosynthesis; gluconeogenesis. In terms of biological role, involved in the gluconeogenesis. Catalyzes the conversion of oxaloacetate (OAA) to phosphoenolpyruvate (PEP) through direct phosphoryl transfer between the nucleoside triphosphate and OAA. The protein is Phosphoenolpyruvate carboxykinase (ATP) of Methylobacterium sp. (strain 4-46).